A 340-amino-acid polypeptide reads, in one-letter code: Ferrochelatase (340 aa).

Residues His189 and Glu292 each coordinate Fe cation.

Belongs to the ferrochelatase family.

The protein localises to the cytoplasm. The enzyme catalyses heme b + 2 H(+) = protoporphyrin IX + Fe(2+). The protein operates within porphyrin-containing compound metabolism; protoheme biosynthesis; protoheme from protoporphyrin-IX: step 1/1. Its function is as follows. Catalyzes the ferrous insertion into protoporphyrin IX. The sequence is that of Ferrochelatase from Pseudomonas syringae pv. syringae (strain B728a).